A 449-amino-acid polypeptide reads, in one-letter code: UDP-N-acetylmuramoylalanine--D-glutamate ligase (449 aa).

113–119 (GTNGKTT) contributes to the ATP binding site.

This sequence belongs to the MurCDEF family.

It is found in the cytoplasm. It carries out the reaction UDP-N-acetyl-alpha-D-muramoyl-L-alanine + D-glutamate + ATP = UDP-N-acetyl-alpha-D-muramoyl-L-alanyl-D-glutamate + ADP + phosphate + H(+). Its pathway is cell wall biogenesis; peptidoglycan biosynthesis. Its function is as follows. Cell wall formation. Catalyzes the addition of glutamate to the nucleotide precursor UDP-N-acetylmuramoyl-L-alanine (UMA). This chain is UDP-N-acetylmuramoylalanine--D-glutamate ligase, found in Gloeothece citriformis (strain PCC 7424) (Cyanothece sp. (strain PCC 7424)).